The following is a 452-amino-acid chain: Growth/differentiation factor 6 (452 aa).

The N-terminal stretch at 1–22 (MDTPRVLLWAIFLISFLWDLPG) is a signal peptide. Positions 23–332 (FQQASISSSS…LPSPGRRRRR (310 aa)) are excised as a propeptide. Residues 29–93 (SSSSSTELDS…QEPPGRGPRV (65 aa)) are disordered. Composition is skewed to basic and acidic residues over residues 37–46 (DSTKDVENRK) and 58–75 (AEGR…ELRR). An N-linked (GlcNAc...) asparagine glycan is attached at Asn-115. Disordered stretches follow at residues 244 to 267 (RDSG…LGFG) and 301 to 348 (AEAA…KKSR). Positions 301-317 (AEAAGAEGSWPAPSGAP) are enriched in low complexity. Basic residues predominate over residues 327-348 (GRRRRRTALSSRHGKRHGKKSR). Disulfide bonds link Cys-351/Cys-417, Cys-380/Cys-449, and Cys-384/Cys-451.

This sequence belongs to the TGF-beta family. Homodimer; disulfide-linked.

It is found in the secreted. Growth factor that controls proliferation and cellular differentiation in the retina and bone formation. Plays a key role in regulating apoptosis during retinal development. Establishes dorsal-ventral positional information in the retina and controls the formation of the retinotectal map. Required for normal formation of bones and joints in the limbs, skull, digits and axial skeleton. Plays a key role in establishing boundaries between skeletal elements during development. Regulation of GDF6 expression seems to be a mechanism for evolving species-specific changes in skeletal structures. Seems to positively regulate differentiation of chondrogenic tissue through the growth factor receptors subunits BMPR1A, BMPR1B, BMPR2 and ACVR2A, leading to the activation of SMAD1-SMAD5-SMAD8 complex. The regulation of chondrogenic differentiation is inhibited by NOG. Also involved in the induction of adipogenesis from mesenchymal stem cells. This mechanism acts through the growth factor receptors subunits BMPR1A, BMPR2 and ACVR2A and the activation of SMAD1-SMAD5-SMAD8 complex and MAPK14/p38. In Rattus norvegicus (Rat), this protein is Growth/differentiation factor 6 (Gdf6).